A 207-amino-acid polypeptide reads, in one-letter code: Uracil phosphoribosyltransferase (207 aa).

5-phospho-alpha-D-ribose 1-diphosphate is bound by residues arginine 77, arginine 102, and 129 to 137 (DPMVATGGS). Uracil is bound by residues isoleucine 192 and 197–199 (GDA). Aspartate 198 provides a ligand contact to 5-phospho-alpha-D-ribose 1-diphosphate.

The protein belongs to the UPRTase family. The cofactor is Mg(2+).

The catalysed reaction is UMP + diphosphate = 5-phospho-alpha-D-ribose 1-diphosphate + uracil. The protein operates within pyrimidine metabolism; UMP biosynthesis via salvage pathway; UMP from uracil: step 1/1. With respect to regulation, allosterically activated by GTP. Functionally, catalyzes the conversion of uracil and 5-phospho-alpha-D-ribose 1-diphosphate (PRPP) to UMP and diphosphate. This is Uracil phosphoribosyltransferase from Mycobacterium bovis (strain ATCC BAA-935 / AF2122/97).